Reading from the N-terminus, the 306-residue chain is Porphobilinogen deaminase (306 aa).

C239 carries the post-translational modification S-(dipyrrolylmethanemethyl)cysteine.

It belongs to the HMBS family. Monomer. Dipyrromethane is required as a cofactor.

The catalysed reaction is 4 porphobilinogen + H2O = hydroxymethylbilane + 4 NH4(+). Its pathway is porphyrin-containing compound metabolism; protoporphyrin-IX biosynthesis; coproporphyrinogen-III from 5-aminolevulinate: step 2/4. Tetrapolymerization of the monopyrrole PBG into the hydroxymethylbilane pre-uroporphyrinogen in several discrete steps. The sequence is that of Porphobilinogen deaminase (hemC) from Helicobacter pylori (strain J99 / ATCC 700824) (Campylobacter pylori J99).